A 156-amino-acid polypeptide reads, in one-letter code: Deoxyuridine 5'-triphosphate nucleotidohydrolase (156 aa).

Residues 76-78 (RSG), Asn89, 93-95 (TVD), and Lys103 each bind substrate.

The protein belongs to the dUTPase family. Mg(2+) serves as cofactor.

The enzyme catalyses dUTP + H2O = dUMP + diphosphate + H(+). Its pathway is pyrimidine metabolism; dUMP biosynthesis; dUMP from dCTP (dUTP route): step 2/2. This enzyme is involved in nucleotide metabolism: it produces dUMP, the immediate precursor of thymidine nucleotides and it decreases the intracellular concentration of dUTP so that uracil cannot be incorporated into DNA. The sequence is that of Deoxyuridine 5'-triphosphate nucleotidohydrolase from Rhizobium johnstonii (strain DSM 114642 / LMG 32736 / 3841) (Rhizobium leguminosarum bv. viciae).